The primary structure comprises 234 residues: UPF0502 protein Bphy_5360 (234 aa).

The protein belongs to the UPF0502 family.

This is UPF0502 protein Bphy_5360 from Paraburkholderia phymatum (strain DSM 17167 / CIP 108236 / LMG 21445 / STM815) (Burkholderia phymatum).